The sequence spans 138 residues: Large ribosomal subunit protein uL16 (138 aa).

Basic residues predominate over residues 1–17 (MLIPRKVKHRKQHHPRQ). Positions 1 to 22 (MLIPRKVKHRKQHHPRQRGIAS) are disordered.

It belongs to the universal ribosomal protein uL16 family. Part of the 50S ribosomal subunit.

In terms of biological role, binds 23S rRNA and is also seen to make contacts with the A and possibly P site tRNAs. The chain is Large ribosomal subunit protein uL16 from Mycobacterium leprae (strain Br4923).